Here is a 234-residue protein sequence, read N- to C-terminus: GTP-binding protein YPT52 (234 aa).

Residues 10–17 (GDSSVGKS), 66–70 (DTAGQ), and 111–114 (NKVG) contribute to the GTP site. Disordered stretches follow at residues 131-151 (QETPSTETSPDSNEGGDEEQK) and 206-234 (NRQIGGGNNGQVDINLQRPSTNDPTSCCS). The segment covering 132 to 142 (ETPSTETSPDS) has biased composition (polar residues). Phosphoserine occurs at positions 139 and 142. Lysine 151 participates in a covalent cross-link: Glycyl lysine isopeptide (Lys-Gly) (interchain with G-Cter in ubiquitin). Over residues 217–234 (VDINLQRPSTNDPTSCCS) the composition is skewed to polar residues. 2 S-geranylgeranyl cysteine lipidation sites follow: cysteine 232 and cysteine 233.

This sequence belongs to the small GTPase superfamily. Rab family. As to quaternary structure, interacts with ROY1, YIF1, YIP3, YIP4 and YIP5.

Its subcellular location is the cell membrane. The protein localises to the endoplasmic reticulum. In terms of biological role, required for transport in the endocytic pathway and for correct sorting of the vacuolar hydrolases suggesting a possible intersection of the endocytic with the vacuolar sorting pathway. May be involved in recruiting the MON1-CCZ1 complex to membranes enriched in phosphatidylinositol 3-phosphate (PtdIns[3]P) or other charged lipids, leading to recruitment of YPT7. This chain is GTP-binding protein YPT52 (YPT52), found in Saccharomyces cerevisiae (strain ATCC 204508 / S288c) (Baker's yeast).